Reading from the N-terminus, the 433-residue chain is Enolase (433 aa).

Glutamine 167 is a (2R)-2-phosphoglycerate binding site. The active-site Proton donor is the glutamate 209. Positions 246, 291, and 318 each coordinate Mg(2+). (2R)-2-phosphoglycerate is bound by residues lysine 343, arginine 372, serine 373, and lysine 394. The active-site Proton acceptor is the lysine 343.

Belongs to the enolase family. In terms of assembly, component of the RNA degradosome, a multiprotein complex involved in RNA processing and mRNA degradation. It depends on Mg(2+) as a cofactor.

It is found in the cytoplasm. It localises to the secreted. The protein localises to the cell surface. The enzyme catalyses (2R)-2-phosphoglycerate = phosphoenolpyruvate + H2O. Its pathway is carbohydrate degradation; glycolysis; pyruvate from D-glyceraldehyde 3-phosphate: step 4/5. Functionally, catalyzes the reversible conversion of 2-phosphoglycerate (2-PG) into phosphoenolpyruvate (PEP). It is essential for the degradation of carbohydrates via glycolysis. The protein is Enolase of Actinobacillus succinogenes (strain ATCC 55618 / DSM 22257 / CCUG 43843 / 130Z).